The sequence spans 367 residues: Phospho-N-acetylmuramoyl-pentapeptide-transferase (367 aa).

10 helical membrane passes run L16–F36, T62–V82, M87–L107, F125–Y145, V158–I178, S190–A210, L214–Y234, Q240–L260, Q264–I284, and F326–P346.

The protein belongs to the glycosyltransferase 4 family. MraY subfamily. Requires Mg(2+) as cofactor.

The protein resides in the cell membrane. The enzyme catalyses UDP-N-acetyl-alpha-D-muramoyl-L-alanyl-gamma-D-glutamyl-meso-2,6-diaminopimeloyl-D-alanyl-D-alanine + di-trans,octa-cis-undecaprenyl phosphate = di-trans,octa-cis-undecaprenyl diphospho-N-acetyl-alpha-D-muramoyl-L-alanyl-D-glutamyl-meso-2,6-diaminopimeloyl-D-alanyl-D-alanine + UMP. It functions in the pathway cell wall biogenesis; peptidoglycan biosynthesis. Its function is as follows. Catalyzes the initial step of the lipid cycle reactions in the biosynthesis of the cell wall peptidoglycan: transfers peptidoglycan precursor phospho-MurNAc-pentapeptide from UDP-MurNAc-pentapeptide onto the lipid carrier undecaprenyl phosphate, yielding undecaprenyl-pyrophosphoryl-MurNAc-pentapeptide, known as lipid I. The sequence is that of Phospho-N-acetylmuramoyl-pentapeptide-transferase from Chloroflexus aurantiacus (strain ATCC 29366 / DSM 635 / J-10-fl).